The chain runs to 197 residues: Putative WUSCHEL-related homeobox 10 (197 aa).

The segment at residues 75–139 (STRPRWTPTT…NRRARSKRKQ (65 aa)) is a DNA-binding region (homeobox; WUS-type). Residues 132 to 168 (RARSKRKQPPTTTITSSQADDAAVTTTEERGRCGDDS) are disordered. Over residues 140–150 (PPTTTITSSQA) the composition is skewed to polar residues.

The protein belongs to the WUS homeobox family.

The protein resides in the nucleus. In terms of biological role, potential transcription factor that plays a central role during developmental processes. This is Putative WUSCHEL-related homeobox 10 (WOX10) from Arabidopsis thaliana (Mouse-ear cress).